Reading from the N-terminus, the 2564-residue chain is MAQVPGEVDNMEGLPAPNNNPAARWESPDRGWEREQPAASTAAASLFECSRIKALADEREAVQKKTFTKWVNSHLARVGCHIGDLYVDLRDGFVLTRLLEVLSGEQLPRPTRGRMRIHSLENVDKALQFLKEQRVHLENVGSHDIVDGNHRLTLGLVWTIILRFQIQVIKIETEDNRETRSAKDALLLWCQMKTAGYPEVNIQNFTTSWRDGLAFNALIHRHRPDLVDFSKLTKSNANYNLQRAFRTAEQHLGLARLLDPEDVNMEAPDEKSIITYVVSFYHYFSKMKALAVEGKRIGKVLDQVLEVGKIIERYEELAAELLAWIHRTVGLISNQKFANSLSGVQQQLQAFTAYCTLEKPVKFQEKGNLEVLLFSIQSKLRACNRRLFVPREGCGIWDIDKAWGELEKAEHEREAALRAELIRQEKLELLAQRFDHKVAMRESWLNENQRLVSQDNFGYELPAVEAAMKKHEAIEADIAAYEERVQGVAELAQALAAEGYYDIRRVAAQRDSVLRQWALLTGLVGARRTRLEQNLALQKVFQEMVYMVDWMEEMQAQLLSRECGQHLVEADDLLQKHGLLEGDIAAQSERVEALNAAALRFSQLQGYQPCDPQVICNRVNHVHGCLAELQEQAARRRAELEASRSLWALLQELEEAESWARDKERLLEAAGGGGAAGAAGAAGTAGGAHDLSSTARLLAQHKILQGELGGRRALLQQALRCGEELVAAGGAVGPGADTVHLVGLAERAASARRRWQRLEEAAARRERRLQEARALHQFGADLDGLLDWLRDAYRLAAAGDFGHDEASSRRLARQHRALTGEVEAHRGPVSGLRRQLATLGGASGAGPLVVALQVRVVEAEQLFAEVTEVAALRRQWLRDALAVYRMFGEVHACELWIGEKEQWLLSMRVPDSLDDVEVVQHRFESLDQEMNSLMGRVLDVNHTVQELVEGGHPSSDEVRSCQDHLNSRWNRIVELVEQRKEEMSAVLLVENHVLEVAEVRAQVREKRRAVESAPRAGGALQWRLSGLEAALQALEPRQAALLEEAALLAERFPAQAARLHQGAEELGAEWGALASAAQACGEAVAAAGRLQRFLHDLDAFLDWLVRAQEAAGGSEGPLPNSLEEADALLARHAALKEEVDQREEDYARIVAASEALLAADGAELGPGLALDEWLPHLELGWHKLLGLWEARREALVQAHIYQLFLRDLRQALVVLRNQEMALSGAELPGTVESVEEALKQHRDFLTTMELSQQKMQVAVQAAEGLLRQGNIYGEQAQEAVTRLLEKNQENQLRAQQWMQKLHDQLELQHFLRDCHELDGWIHEKMLMARDGTREDNHKLHKRWLRHQAFMAELAQNKEWLEKIEREGQQLMQEKPELAASVRKKLGEIRQCWAELESTTQAKARQLFEASKADQLVQSFAELDKKLLHMESQLQDVDPGGDLATVNSQLKKLQSMESQVEEWYREVGELQAQTAALPLEPASKELVGERQNAVGERLVRLLEPLQERRRLLLASKELHQVAHDLDDELAWVQERLPLAMQTERGNGLQAVQQHIKKNQGLRREIQAHGPRLEEVLERAGALASLRSPEAEAVRRGLEQLQSAWAGLREAAERRQQVLDAAFQVEQYYFDVAEVEAWLGEQELLMMSEDKGKDEQSTLQLLKKHLQLEQGVENYEESIAQLSRQCRALLEMGHPDSEQISRRQSQVDRLYVALKELGEERRVALEQQYWLYQLSRQVSELEHWIAEKEVVAGSPELGQDFEHVSVLQEKFSEFASETGMAGRERLAAVNQMVDELIECGHTAAATMAEWKDGLNEAWAELLELMGTRAQLLAASRELHKFFSDARELQGQIEEKRRRLPRLTTPPEPRPSASSMQRTLRAFEHDLQLLVSQVRQLQEGAAQLRTVYAGEHAEAIASREQEVLQGWKELLSACEDARLHVSSTADALRFHSQVRDLLSWMDGIASQIGAADKPRDVSSVEVLMNYHQGLKTELEARVPELTTCQELGRSLLLNKSAMADEIQAQLDKLGTRKEEVSEKWDRHWEWLQQMLEVHQFAQEAVVADAWLTAQEPLLQSRELGSSVDEVEQLIRRHEAFRKAAAAWEERFSSLRRLTTIEKIKAEQSKQPPTPLLGRKFFGDPTELAAKAAPLLRPGGYERGLEPLARRASDTLSAEVRTRVGYVRQELKPERLQPRIDRLPEIPGRVEPAALPAAPEDAAETPATPAAAEQVRPRPERQESADRAEELPRRRRPERQESVDQSEEAARRRRPERQESAEHEAAHSLTLGRYEQMERRRERRERRLERQESSEQEMPIRGDLVKGKATLADIVEQLQEKEAGPGLPAGPSLPQPRELPPGRLPNGLELPERTPRPDRPRARDRPKPRRRPRPREGGEGGGSRRSRSAPAQGGSAPAPPPPPTHTVQHEGFLLRKRELDANRKSSNRSWVSLYCVLSKGELGFYKDSKGPASGSTHGGEPLLSLHKATSEVASDYKKKKHVFKLQTQDGSEFLLQAKDEEEMNGWLEAVASSVAEHAEIARWGQTLPTTSSTDEGNPKREGGDRRASGRRK.

Positions 1–37 (MAQVPGEVDNMEGLPAPNNNPAARWESPDRGWEREQP) are disordered. Positions 1–282 (MAQVPGEVDN…IITYVVSFYH (282 aa)) are actin-binding. The span at 26–36 (ESPDRGWEREQ) shows a compositional bias: basic and acidic residues. Calponin-homology (CH) domains are found at residues 61–165 (AVQK…LRFQ) and 180–285 (RSAK…HYFS). Spectrin repeat units lie at residues 311–418 (IERY…AALR), 430–533 (LAQR…RLEQ), 536–641 (ALQK…AELE), 774–879 (ALHQ…WLRD), 884–982 (YRMF…RKEE), 1089–1196 (RLQR…EALV), 1306–1407 (ELQH…RQLF), 1412–1512 (ADQL…RLLL), 1515–1617 (KELH…QQVL), 1623–1725 (VEQY…ALEQ), 1728–1830 (WLYQ…AQLL), 1835–1935 (ELHK…EDAR), 1944–2046 (ALRF…WLQQ), and 2049–2123 (EVHQ…QSKQ). The disordered stretch occupies residues 1853 to 1872 (KRRRLPRLTTPPEPRPSASS). Over residues 2208 to 2225 (PAAPEDAAETPATPAAAE) the composition is skewed to low complexity. Disordered stretches follow at residues 2208–2439 (PAAP…KSSN) and 2533–2564 (ARWGQTLPTTSSTDEGNPKREGGDRRASGRRK). Basic and acidic residues-rich tracts occupy residues 2227–2254 (VRPRPERQESADRAEELPRRRRPERQES), 2268–2278 (ERQESAEHEAA), and 2287–2318 (EQMERRRERRERRLERQESSEQEMPIRGDLVK). Pro residues predominate over residues 2343–2355 (PSLPQPRELPPGR). Composition is skewed to basic and acidic residues over residues 2362–2377 (LPERTPRPDRPRARDR) and 2424–2435 (FLLRKRELDANR). The PH domain maps to 2418–2527 (TVQHEGFLLR…WLEAVASSVA (110 aa)). Residues 2538–2547 (TLPTTSSTDE) are compositionally biased toward polar residues. Positions 2548–2564 (GNPKREGGDRRASGRRK) are enriched in basic and acidic residues.

Belongs to the spectrin family. As to expression, expressed in skeletal muscle at the sarcolemma and in the muscle capillaries (at protein level). Abundantly expressed in brain and pancreatic islets.

It localises to the cytoplasm. The protein localises to the cytoskeleton. Its subcellular location is the cell cortex. The protein is Spectrin beta chain, non-erythrocytic 4 (SPTBN4) of Homo sapiens (Human).